The sequence spans 298 residues: Diphthine methyl ester synthase (298 aa).

Residues L9, D85, G88, S113–V114, L164, L222, and H247 contribute to the S-adenosyl-L-methionine site.

The protein belongs to the diphthine synthase family.

Its subcellular location is the cytoplasm. It carries out the reaction 2-[(3S)-amino-3-carboxypropyl]-L-histidyl-[translation elongation factor 2] + 4 S-adenosyl-L-methionine = diphthine methyl ester-[translation elongation factor 2] + 4 S-adenosyl-L-homocysteine + 3 H(+). The protein operates within protein modification; peptidyl-diphthamide biosynthesis. Its function is as follows. S-adenosyl-L-methionine-dependent methyltransferase that catalyzes four methylations of the modified target histidine residue in translation elongation factor 2 (EF-2), to form an intermediate called diphthine methyl ester. The four successive methylation reactions represent the second step of diphthamide biosynthesis. This chain is Diphthine methyl ester synthase (DPH5), found in Kluyveromyces lactis (strain ATCC 8585 / CBS 2359 / DSM 70799 / NBRC 1267 / NRRL Y-1140 / WM37) (Yeast).